A 472-amino-acid chain; its full sequence is NADH-quinone oxidoreductase subunit N (472 aa).

The next 14 membrane-spanning stretches (helical) occupy residues A11–A31, I43–G63, S67–L87, G103–G123, F125–F145, F159–G179, V200–H220, V234–L254, W265–I285, F293–T313, A318–I338, P362–F384, L401–V421, and L446–L466.

The protein belongs to the complex I subunit 2 family. As to quaternary structure, NDH-1 is composed of 14 different subunits. Subunits NuoA, H, J, K, L, M, N constitute the membrane sector of the complex.

The protein localises to the cell inner membrane. The catalysed reaction is a quinone + NADH + 5 H(+)(in) = a quinol + NAD(+) + 4 H(+)(out). NDH-1 shuttles electrons from NADH, via FMN and iron-sulfur (Fe-S) centers, to quinones in the respiratory chain. The immediate electron acceptor for the enzyme in this species is believed to be a menaquinone. Couples the redox reaction to proton translocation (for every two electrons transferred, four hydrogen ions are translocated across the cytoplasmic membrane), and thus conserves the redox energy in a proton gradient. This Phocaeicola vulgatus (strain ATCC 8482 / DSM 1447 / JCM 5826 / CCUG 4940 / NBRC 14291 / NCTC 11154) (Bacteroides vulgatus) protein is NADH-quinone oxidoreductase subunit N.